The following is a 110-amino-acid chain: Iron-sulfur cluster assembly protein CyaY (110 aa).

It belongs to the frataxin family.

Its function is as follows. Involved in iron-sulfur (Fe-S) cluster assembly. May act as a regulator of Fe-S biogenesis. The sequence is that of Iron-sulfur cluster assembly protein CyaY from Azotobacter vinelandii (strain DJ / ATCC BAA-1303).